A 958-amino-acid polypeptide reads, in one-letter code: Transportin MOS14 (958 aa).

In terms of domain architecture, Importin N-terminal spans 26-93; that stretch reads ADRWLQNFQG…RQSLTTLLKK (68 aa).

Belongs to the importin beta family. As to quaternary structure, interacts with RS2Z33, RSZ21, RS31A, SR34 and RAN1.

Its subcellular location is the nucleus. Functions as a nuclear import receptor for serine-arginine rich (SR) proteins. Regulates nuclear import of SR proteins that are required for proper splicing of the two resistance (R) genes SNC1 and RPS4, a crucial step for their functions in plant immunity. The sequence is that of Transportin MOS14 from Arabidopsis thaliana (Mouse-ear cress).